A 276-amino-acid chain; its full sequence is Bis(5'-nucleosyl)-tetraphosphatase, symmetrical (276 aa).

This sequence belongs to the Ap4A hydrolase family.

The catalysed reaction is P(1),P(4)-bis(5'-adenosyl) tetraphosphate + H2O = 2 ADP + 2 H(+). Functionally, hydrolyzes diadenosine 5',5'''-P1,P4-tetraphosphate to yield ADP. This chain is Bis(5'-nucleosyl)-tetraphosphatase, symmetrical, found in Legionella pneumophila (strain Corby).